We begin with the raw amino-acid sequence, 176 residues long: Oxaleimides biosynthesis cluster protein N (176 aa).

A run of 4 helical transmembrane segments spans residues 5–25 (LLVV…PLIT), 71–91 (VWTG…LNLF), 104–124 (FLYG…PKML), and 155–175 (FWIV…EGLK).

The protein localises to the membrane. Its pathway is secondary metabolite biosynthesis. Functionally, part of the gene cluster that mediates the biosynthesis of oxaleimides, cytotoxic compounds containing an unusual disubstituted succinimide moiety. The first step of the pathway is provided by the HR-PKS poxF that serves in a new mode of collaborative biosynthesis with the PKS-NRPS poxE, by providing the olefin containing amino acid substrate via the synthesis of an ACP-bound dec-4-enoate. The cytochrome P450 monooxygenase poxM-catalyzed oxidation at the alpha-position creates the enzyme-bound 2-hydroxydec-4-enoyl-ACP thioester, which may be prone to spontaneous hydrolysis to yield 2-hydroxydec-4-enoic acid due to increased electrophilicity of the carbonyl. 2-hydroxydec-4-enoic acid can then be further oxidized by poxM to yield the alpha-ketoacid 2-oxodec-4-enoicacid, which is reductively aminated by the aminotransferase poxL to yield (S,E)-2-aminodec-4-enoic acid. The Hybrid PKS-NRPS synthetase poxE then performs condensation between the octaketide product of its PKS modules and the amino group of (S,E)-2-aminodec-4-enoic acid which is activated and incorporated by the adenylation domain. The resulting aminoacyl product can be cyclized by the Diels-Alderase PoxQ and reductively released by the reductive (R) domain of poxE to yield an aldehyde intermediate. The released aldehyde is then substrate for a Knoevenagel condensation by the hydrolyase poxO followed by an oxidation at the 5-position of the pyrrolidone ring. The presence of the olefin from the amino acid building block allows for migration of the substituted allyl group to occur. This allylic transposition reaction takes place in a conjugate addition, semipinacol-like fashion to yield a succinimide intermediate. Iterative two-electron oxidations of the C7 methyl of the succinimide intermediate to the carboxylic acid can be catalyzed by one of two remaining cytochrome P450 monooxygenasess poxC or poxD to yield oxaleimide A. Subsequent oxidation yields the maleimide scaffold oxaleimide I. Both oxaleimide A and oxaleimide I can undergo oxidative modifications in the decalin ring to yield the series of products oxaleimides B to H. The sequence is that of Oxaleimides biosynthesis cluster protein N from Penicillium oxalicum (strain 114-2 / CGMCC 5302) (Penicillium decumbens).